The sequence spans 626 residues: Chaperone protein HtpG (626 aa).

Residues 1–338 form an a; substrate-binding region; the sequence is MTANKNQKKT…SNDLPLNVSR (338 aa). The tract at residues 339–553 is b; that stretch reads EILQDHKLVY…SNEMSTQMAK (215 aa). Residues 554-626 form a c region; sequence LFSAAGQTVP…ARINDLLINN (73 aa).

It belongs to the heat shock protein 90 family. As to quaternary structure, homodimer.

Its subcellular location is the cytoplasm. Its function is as follows. Molecular chaperone. Has ATPase activity. The protein is Chaperone protein HtpG of Buchnera aphidicola subsp. Baizongia pistaciae (strain Bp).